The chain runs to 133 residues: ATP synthase epsilon chain (133 aa).

Belongs to the ATPase epsilon chain family. In terms of assembly, F-type ATPases have 2 components, CF(1) - the catalytic core - and CF(0) - the membrane proton channel. CF(1) has five subunits: alpha(3), beta(3), gamma(1), delta(1), epsilon(1). CF(0) has three main subunits: a, b and c.

The protein localises to the cell membrane. Its function is as follows. Produces ATP from ADP in the presence of a proton gradient across the membrane. This Bacillus anthracis (strain A0248) protein is ATP synthase epsilon chain.